The following is a 608-amino-acid chain: RAS guanyl-releasing protein 2 (608 aa).

The region spanning 4-126 (TLDLDKGCTV…SLIDIENVPT (123 aa)) is the N-terminal Ras-GEF domain. S116, S117, and S147 each carry phosphoserine. Residues 154 to 387 (EPLELAAHLT…YQLSLQREPR (234 aa)) enclose the Ras-GEF domain. The interval 382–407 (LQREPRSKSSPTSPTTCTPPPRPPVL) is disordered. 2 EF-hand domains span residues 426-461 (HIEKMVESVFRNFDVDGDGHISQEEFQIIRGNFPYL) and 463-490 (AFGDLDQNQDGCISKEEMVSYFLRSSSM). 10 residues coordinate Ca(2+): D439, D441, D443, H445, E450, D468, N470, D472, C474, and E479. A Phorbol-ester/DAG-type zinc finger spans residues 498–548 (VHNFHESNSLRPVACRHCKALILGIYKQGLKCRACGVNCHKQCKDRLSVEC). 2 positions are modified to phosphoserine: S554 and S575. The disordered stretch occupies residues 556–591 (SLEGSAPSPSPTHTHHRAFSFSLPRPGRRGSRPPEI).

It belongs to the RASGRP family. As to quaternary structure, forms a signaling complex with RAP1 and BRAF. Interacts with RAP1. Interacts with F-actin.

It is found in the cytoplasm. Its subcellular location is the cytosol. The protein localises to the cell membrane. The protein resides in the synapse. It localises to the synaptosome. It is found in the cell projection. Its subcellular location is the ruffle membrane. In terms of biological role, functions as a calcium- and DAG-regulated nucleotide exchange factor specifically activating Rap through the exchange of bound GDP for GTP. May also activate other GTPases such as RRAS, RRAS2, NRAS, KRAS but not HRAS. Functions in aggregation of platelets and adhesion of T-lymphocytes and neutrophils probably through inside-out integrin activation. May function in the muscarinic acetylcholine receptor M1/CHRM1 signaling pathway. This Bos taurus (Bovine) protein is RAS guanyl-releasing protein 2 (RASGRP2).